We begin with the raw amino-acid sequence, 296 residues long: Lipoyl synthase (296 aa).

Residues C37, C42, C48, C63, C67, C70, and S276 each coordinate [4Fe-4S] cluster. In terms of domain architecture, Radical SAM core spans 49-265; the sequence is WSKKHTTVMI…ERVAKTKGFL (217 aa).

This sequence belongs to the radical SAM superfamily. Lipoyl synthase family. It depends on [4Fe-4S] cluster as a cofactor.

It localises to the cytoplasm. It carries out the reaction [[Fe-S] cluster scaffold protein carrying a second [4Fe-4S](2+) cluster] + N(6)-octanoyl-L-lysyl-[protein] + 2 oxidized [2Fe-2S]-[ferredoxin] + 2 S-adenosyl-L-methionine + 4 H(+) = [[Fe-S] cluster scaffold protein] + N(6)-[(R)-dihydrolipoyl]-L-lysyl-[protein] + 4 Fe(3+) + 2 hydrogen sulfide + 2 5'-deoxyadenosine + 2 L-methionine + 2 reduced [2Fe-2S]-[ferredoxin]. It functions in the pathway protein modification; protein lipoylation via endogenous pathway; protein N(6)-(lipoyl)lysine from octanoyl-[acyl-carrier-protein]: step 2/2. Functionally, catalyzes the radical-mediated insertion of two sulfur atoms into the C-6 and C-8 positions of the octanoyl moiety bound to the lipoyl domains of lipoate-dependent enzymes, thereby converting the octanoylated domains into lipoylated derivatives. The protein is Lipoyl synthase of Rickettsia peacockii (strain Rustic).